The chain runs to 363 residues: Large ribosomal subunit protein uL4A (363 aa).

Phosphoserine is present on Ser87. Positions 280 to 363 (PENIISNADV…EKFLTVLHEN (84 aa)) are C-terminal-extended nuclear localization signal.

This sequence belongs to the universal ribosomal protein uL4 family. As to quaternary structure, component of the large ribosomal subunit (LSU). Mature yeast ribosomes consist of a small (40S) and a large (60S) subunit. The 40S small subunit contains 1 molecule of ribosomal RNA (18S rRNA) and at least 33 different proteins. The large 60S subunit contains 3 rRNA molecules (25S, 5.8S and 5S rRNA) and at least 46 different proteins. uL4 is associated with the polypeptide exit tunnel. uL4 interacts with its chaperone ACL4 and the nuclear import receptor KAP104.

The protein localises to the cytoplasm. It localises to the nucleus. In terms of biological role, component of the ribosome, a large ribonucleoprotein complex responsible for the synthesis of proteins in the cell. The small ribosomal subunit (SSU) binds messenger RNAs (mRNAs) and translates the encoded message by selecting cognate aminoacyl-transfer RNA (tRNA) molecules. The large subunit (LSU) contains the ribosomal catalytic site termed the peptidyl transferase center (PTC), which catalyzes the formation of peptide bonds, thereby polymerizing the amino acids delivered by tRNAs into a polypeptide chain. The nascent polypeptides leave the ribosome through a tunnel in the LSU and interact with protein factors that function in enzymatic processing, targeting, and the membrane insertion of nascent chains at the exit of the ribosomal tunnel. uL4 participates in the regulation of the accumulation of its own mRNA. This Schizosaccharomyces pombe (strain 972 / ATCC 24843) (Fission yeast) protein is Large ribosomal subunit protein uL4A (rpl402).